Reading from the N-terminus, the 54-residue chain is Large ribosomal subunit protein bL33 (54 aa).

It belongs to the bacterial ribosomal protein bL33 family.

In Petrotoga mobilis (strain DSM 10674 / SJ95), this protein is Large ribosomal subunit protein bL33.